A 416-amino-acid chain; its full sequence is Gamma-glutamyl phosphate reductase (416 aa).

It belongs to the gamma-glutamyl phosphate reductase family.

It is found in the cytoplasm. The catalysed reaction is L-glutamate 5-semialdehyde + phosphate + NADP(+) = L-glutamyl 5-phosphate + NADPH + H(+). The protein operates within amino-acid biosynthesis; L-proline biosynthesis; L-glutamate 5-semialdehyde from L-glutamate: step 2/2. In terms of biological role, catalyzes the NADPH-dependent reduction of L-glutamate 5-phosphate into L-glutamate 5-semialdehyde and phosphate. The product spontaneously undergoes cyclization to form 1-pyrroline-5-carboxylate. In Vibrio atlanticus (strain LGP32) (Vibrio splendidus (strain Mel32)), this protein is Gamma-glutamyl phosphate reductase.